Reading from the N-terminus, the 338-residue chain is Glyceraldehyde-3-phosphate dehydrogenase 2 (338 aa).

NAD(+)-binding positions include 13-14 (RI), Asp-35, and Arg-80. D-glyceraldehyde 3-phosphate is bound by residues 151–153 (SCT), Thr-182, 211–212 (TG), and Arg-234. Residue Cys-152 is the Nucleophile of the active site. Residue Asn-316 coordinates NAD(+).

Belongs to the glyceraldehyde-3-phosphate dehydrogenase family. In terms of assembly, homotetramer.

It localises to the cytoplasm. The catalysed reaction is D-glyceraldehyde 3-phosphate + phosphate + NAD(+) = (2R)-3-phospho-glyceroyl phosphate + NADH + H(+). Its pathway is carbohydrate degradation; glycolysis; pyruvate from D-glyceraldehyde 3-phosphate: step 1/5. Its activity is regulated as follows. Inhibited by koningic acid through the interaction of cysteine residues with koningic acid even at very low concentrations. The sequence is that of Glyceraldehyde-3-phosphate dehydrogenase 2 (gpd2) from Trichoderma koningii (Hypocrea koningii).